The chain runs to 501 residues: Lysine--tRNA ligase (501 aa).

Positions 402 and 409 each coordinate Mg(2+).

This sequence belongs to the class-II aminoacyl-tRNA synthetase family. In terms of assembly, homodimer. Mg(2+) serves as cofactor.

The protein resides in the cytoplasm. It carries out the reaction tRNA(Lys) + L-lysine + ATP = L-lysyl-tRNA(Lys) + AMP + diphosphate. The sequence is that of Lysine--tRNA ligase (lysS) from Helicobacter pylori (strain ATCC 700392 / 26695) (Campylobacter pylori).